A 412-amino-acid polypeptide reads, in one-letter code: Isocitrate dehydrogenase [NADP] cytoplasmic (412 aa).

Residues 75–77 and R82 contribute to the NADP(+) site; that span reads TIT. T77 contributes to the substrate binding site. Residues 94-100, R109, and R132 contribute to the substrate site; that span reads SPNGTIR. D252 serves as a coordination point for Mn(2+). K260 contributes to the NADP(+) binding site. D275 contributes to the Mn(2+) binding site. NADP(+) is bound by residues 310 to 315 and N328; that span reads GTVTRH.

This sequence belongs to the isocitrate and isopropylmalate dehydrogenases family. Homodimer. Mg(2+) serves as cofactor. It depends on Mn(2+) as a cofactor. In terms of processing, the N-terminus is blocked.

Its subcellular location is the cytoplasm. The catalysed reaction is D-threo-isocitrate + NADP(+) = 2-oxoglutarate + CO2 + NADPH. By catabolite repression. Its function is as follows. May function in the production of NADPH for fatty acid and sterol synthesis. The protein is Isocitrate dehydrogenase [NADP] cytoplasmic (IDP2) of Saccharomyces cerevisiae (strain ATCC 204508 / S288c) (Baker's yeast).